Consider the following 476-residue polypeptide: Angiotensinogen (476 aa).

Positions M1 to G24 are cleaved as a signal peptide. D25 is subject to Beta-decarboxylated aspartate; in form angiotensin-A. N38, N161, N295, and N319 each carry an N-linked (GlcNAc...) asparagine glycan. A disulfide bridge links C42 with C162.

This sequence belongs to the serpin family. As to quaternary structure, during pregnancy, exists as a disulfide-linked 2:2 heterotetramer with the proform of PRG2 and as a complex (probably a 2:2:2 heterohexamer) with pro-PRG2 and C3dg. Beta-decarboxylation of Asp-25 in angiotensin-2, by mononuclear leukocytes produces alanine. The resulting peptide form, angiotensin-A, has the same affinity for the AT1 receptor as angiotensin-2, but a higher affinity for the AT2 receptor. Post-translationally, in response to low blood pressure, the enzyme renin/REN cleaves angiotensinogen to produce angiotensin-1. Angiotensin-1 is a substrate of ACE (angiotensin converting enzyme) that removes a dipeptide to yield the physiologically active peptide angiotensin-2. Angiotensin-1 and angiotensin-2 can be further processed to generate angiotensin-3, angiotensin-4. Angiotensin 1-9 is cleaved from angiotensin-1 by ACE2 and can be further processed by ACE to produce angiotensin 1-7, angiotensin 1-5 and angiotensin 1-4. Angiotensin 1-7 has also been proposed to be cleaved from angiotensin-2 by ACE2 or from angiotensin-1 by MME (neprilysin). In terms of processing, the disulfide bond is labile. Angiotensinogen is present in the circulation in a near 40:60 ratio with the oxidized disulfide-bonded form, which preferentially interacts with receptor-bound renin. In terms of tissue distribution, expressed by the liver and secreted in plasma.

Its subcellular location is the secreted. In terms of biological role, essential component of the renin-angiotensin system (RAS), a potent regulator of blood pressure, body fluid and electrolyte homeostasis. Functionally, acts directly on vascular smooth muscle as a potent vasoconstrictor, affects cardiac contractility and heart rate through its action on the sympathetic nervous system, and alters renal sodium and water absorption through its ability to stimulate the zona glomerulosa cells of the adrenal cortex to synthesize and secrete aldosterone. Acts by binding to angiotensin receptors AGTR1 and AGTR2. Also binds the DEAR/FBXW7-AS1 receptor. Stimulates aldosterone release. Its function is as follows. Is a ligand for the G-protein coupled receptor MAS1. Has vasodilator and antidiuretic effects. Has an antithrombotic effect that involves MAS1-mediated release of nitric oxide from platelets. The protein is Angiotensinogen of Homo sapiens (Human).